The chain runs to 338 residues: Ketol-acid reductoisomerase (NADP(+)) (338 aa).

The region spanning 1–181 is the KARI N-terminal Rossmann domain; the sequence is MKVFYDKDCD…GGGKGGIIET (181 aa). NADP(+)-binding positions include 24 to 27, R47, and S52; that span reads YGSQ. H107 is an active-site residue. G133 is a binding site for NADP(+). Positions 182–327 constitute a KARI C-terminal knotted domain; the sequence is NFKEETETDL…GQLRAMMPWI (146 aa). Mg(2+) is bound by residues D190, E194, E226, and E230. Residue S251 coordinates substrate.

The protein belongs to the ketol-acid reductoisomerase family. Requires Mg(2+) as cofactor.

The catalysed reaction is (2R)-2,3-dihydroxy-3-methylbutanoate + NADP(+) = (2S)-2-acetolactate + NADPH + H(+). The enzyme catalyses (2R,3R)-2,3-dihydroxy-3-methylpentanoate + NADP(+) = (S)-2-ethyl-2-hydroxy-3-oxobutanoate + NADPH + H(+). The protein operates within amino-acid biosynthesis; L-isoleucine biosynthesis; L-isoleucine from 2-oxobutanoate: step 2/4. Its pathway is amino-acid biosynthesis; L-valine biosynthesis; L-valine from pyruvate: step 2/4. Functionally, involved in the biosynthesis of branched-chain amino acids (BCAA). Catalyzes an alkyl-migration followed by a ketol-acid reduction of (S)-2-acetolactate (S2AL) to yield (R)-2,3-dihydroxy-isovalerate. In the isomerase reaction, S2AL is rearranged via a Mg-dependent methyl migration to produce 3-hydroxy-3-methyl-2-ketobutyrate (HMKB). In the reductase reaction, this 2-ketoacid undergoes a metal-dependent reduction by NADPH to yield (R)-2,3-dihydroxy-isovalerate. This chain is Ketol-acid reductoisomerase (NADP(+)), found in Delftia acidovorans (strain DSM 14801 / SPH-1).